The primary structure comprises 356 residues: MDAIVVSKADRTPRLVDRPRPDPTPGSVLVRTLRVGVDGTDHEVIAGTHGGFPEDADELVLGHEAIGVVADPTDTRFSAGQLVAPTVRRPRGDPTPQFDRGQPDMAAPGTYVERGIDGADGFMADYFTSPADALVALPDSLAAHGFLTEPVSVAEKAIELALASRSAFDWRPDSALVLGNGSLGLLTLAILAARDDTETLYCLGRRSRPDPTIDIIERLGATYIDSRTTPVADIPAAHQPVDMVYEATGHAKHAFDAIDALAPAGVAALLGVPAAGWTFEVPGSDLHRSLVLENKAVVGSVNSNARHFRAAADTLAALPDWLCDAIVTGVHDTAAFADAFRDGETSIKTAVQFDTR.

The segment at 1 to 26 (MDAIVVSKADRTPRLVDRPRPDPTPG) is disordered. The span at 8–21 (KADRTPRLVDRPRP) shows a compositional bias: basic and acidic residues. Asp38 provides a ligand contact to Zn(2+). Position 40 (Thr40) interacts with substrate. Residues His63 and Glu64 each coordinate Zn(2+). Positions 86–107 (TVRRPRGDPTPQFDRGQPDMAA) are disordered. Residues Glu113 and Glu149 each contribute to the substrate site. Position 149 (Glu149) interacts with Zn(2+). NADP(+) is bound by residues 180–183 (NGSL), 205–206 (RR), 270–272 (LGV), and 300–302 (SVN). Residue Asn302 participates in substrate binding.

This sequence belongs to the zinc-containing alcohol dehydrogenase family. Glucose 1-dehydrogenase subfamily. It depends on Zn(2+) as a cofactor.

The enzyme catalyses D-glucose + NAD(+) = D-glucono-1,5-lactone + NADH + H(+). It catalyses the reaction D-glucose + NADP(+) = D-glucono-1,5-lactone + NADPH + H(+). Functionally, catalyzes the NAD(P)(+)-dependent oxidation of D-glucose to D-gluconate via gluconolactone. Can utilize both NAD(+) and NADP(+) as electron acceptor. Is involved in the degradation of glucose through a modified Entner-Doudoroff pathway. The chain is Glucose 1-dehydrogenase from Halobacterium salinarum (strain ATCC 700922 / JCM 11081 / NRC-1) (Halobacterium halobium).